Reading from the N-terminus, the 301-residue chain is Retinochrome (301 aa).

Topologically, residues 1–17 (MFGNPAMTGLHQFTMWE) are extracellular. The chain crosses the membrane as a helical span at residues 18 to 43 (HYFTGSIYLVLGCVVFSLCGMCIIFL). Residues 44 to 54 (ARQSPKPRRKY) are Cytoplasmic-facing. The chain crosses the membrane as a helical span at residues 55 to 76 (AILIHVLITAMAVNGGDPAHAS). Residues 77 to 94 (SSIVGRWLYGSVGCQLMG) are Extracellular-facing. The helical transmembrane segment at 95–120 (FWGFFGGMSHIWMLFAFAMERYMAVC) threads the bilayer. At 121-132 (HREFYQQMPSVY) the chain is on the cytoplasmic side. Residues 133–153 (YSIIVGLMYTFGTFWATMPLL) traverse the membrane as a helical segment. Over 154-180 (GWASYGLEVHGTSCTINYSVSDESYQS) the chain is Extracellular. Asn170 carries N-linked (GlcNAc...) asparagine glycosylation. Residues 181–208 (YVFFLAIFSFIFPMVSGWYAISKAWSGL) form a helical membrane-spanning segment. Residues 209–230 (SAIPDAEKEKDKDILSEEQLTA) lie on the Cytoplasmic side of the membrane. A helical transmembrane segment spans residues 231–255 (LAGAFILISLISWSGFGYVAIYSAL). Over 256–264 (THGGAQLSH) the chain is Extracellular. Residues 265–289 (LRGHVPPIMSKTGCALFPLLIFLLT) traverse the membrane as a helical segment. Residue Lys275 is modified to N6-(retinylidene)lysine. Residues 290–301 (ARSLPKSDTKKP) are Cytoplasmic-facing.

The protein belongs to the G-protein coupled receptor 1 family. Opsin subfamily. Mainly stored in myeloid bodies of the inner segments.

The protein localises to the membrane. Its function is as follows. Retinochrome is capable of acting as an effective catalyst in the light to convert various isomers of retinal into 11-cis, the form that is required by opsin to resynthesize rhodopsin. The chain is Retinochrome from Todarodes pacificus (Japanese flying squid).